The primary structure comprises 181 residues: Oligoribonuclease (181 aa).

Residues 8-171 enclose the Exonuclease domain; the sequence is LIWIDLEMTG…DDIRESVAEL (164 aa). The active site involves Tyr-129.

Belongs to the oligoribonuclease family.

The protein localises to the cytoplasm. In terms of biological role, 3'-to-5' exoribonuclease specific for small oligoribonucleotides. This is Oligoribonuclease from Enterobacter sp. (strain 638).